A 370-amino-acid chain; its full sequence is Mitogen-activated protein kinase 3 (370 aa).

The region spanning 38-324 (RPPIIPIGRG…VEQALNHQYL (287 aa)) is the Protein kinase domain. ATP contacts are provided by residues 44-52 (IGRGAYGIV) and Lys67. Asp164 acts as the Proton acceptor in catalysis. Thr196 is modified (phosphothreonine). The short motif at 196–198 (TEY) is the TXY element. Position 198 is a phosphotyrosine (Tyr198). Position 201 is a phosphothreonine (Thr201).

The protein belongs to the protein kinase superfamily. CMGC Ser/Thr protein kinase family. MAP kinase subfamily. In terms of assembly, interacts with DSPTP1B/MKP2, NDPK2 and VIP1. The interaction with DSPTP1B/MKP2 is repressed by fungal elicitation. Binds to LIP5. Interacts with VQ4. Interacts with RACK1A, RACK1B and RACK1C. Interacts with FLZ9. Interacts with MKK5. In terms of processing, dually phosphorylated on Thr-196 and Tyr-198, which activates the enzyme. Dephosphorylated by DSPTP1B/MKP2.

The protein localises to the cytoplasm. Its subcellular location is the nucleus. It is found in the cell cortex. It carries out the reaction L-seryl-[protein] + ATP = O-phospho-L-seryl-[protein] + ADP + H(+). It catalyses the reaction L-threonyl-[protein] + ATP = O-phospho-L-threonyl-[protein] + ADP + H(+). Activated by threonine and tyrosine phosphorylation. Activated by MAP kinase kinases MKK4, MKK5, MKK7 and MKK9. Activated in response to hydrogen peroxide, ozone, salt stress and flagellin bacterial elicitor. Triggered by Agrobacterium upon T-DNA transfer. Repressed by DSPTP1B/MKP2-mediated dephosphorylation. Involved in oxidative stress-mediated signaling cascade (such as ozone). Involved in the innate immune MAP kinase signaling cascade (MEKK1, MKK4/MKK5 and MPK3/MPK6) downstream of bacterial flagellin receptor FLS2. May be involved in hypersensitive response (HR)-mediated signaling cascade by modulating LIP5 phosphorylation and subsequent multivesicular bodies (MVBs) trafficking. May phosphorylate regulators of WRKY transcription factors. Mediates the phosphorylation of VIP1 and subsequent stress genes transcription in response to Agrobacterium. MKK9-MPK3/MPK6 module phosphorylates and activates EIN3, leading to the promotion of EIN3-mediated transcription in ethylene signaling. MPK3/MPK6 cascade regulates camalexin synthesis through transcriptional regulation of the biosynthetic genes after pathogen infection. YDA-MKK4/MKK5-MPK3/MPK6 module regulates stomatal cell fate before the guard mother cell (GMC) is specified. When activated, reinforces the feedback loop by phosphorylating BASL, and inhibits stomatal fate by phosphorylating SPCH. This MAPK cascade also functions downstream of the ER receptor in regulating coordinated local cell proliferation, which shapes the morphology of plant organs. This Arabidopsis thaliana (Mouse-ear cress) protein is Mitogen-activated protein kinase 3.